The following is a 159-amino-acid chain: Large ribosomal subunit protein uL22 (159 aa).

Belongs to the universal ribosomal protein uL22 family. Part of the 50S ribosomal subunit.

Functionally, this protein binds specifically to 23S rRNA. It makes multiple contacts with different domains of the 23S rRNA in the assembled 50S subunit and ribosome. Its function is as follows. The globular domain of the protein is located near the polypeptide exit tunnel on the outside of the subunit, while an extended beta-hairpin is found that lines the wall of the exit tunnel in the center of the 70S ribosome. This Ignicoccus hospitalis (strain KIN4/I / DSM 18386 / JCM 14125) protein is Large ribosomal subunit protein uL22.